The primary structure comprises 258 residues: UPF0246 protein Pnap_3166 (258 aa).

Belongs to the UPF0246 family.

The chain is UPF0246 protein Pnap_3166 from Polaromonas naphthalenivorans (strain CJ2).